The primary structure comprises 118 residues: Small ribosomal subunit protein uS13 (118 aa).

The tract at residues 94-118 is disordered; it reads GLPVRGQRTKTNARTRKGPRKPIKK.

It belongs to the universal ribosomal protein uS13 family. As to quaternary structure, part of the 30S ribosomal subunit. Forms a loose heterodimer with protein S19. Forms two bridges to the 50S subunit in the 70S ribosome.

Functionally, located at the top of the head of the 30S subunit, it contacts several helices of the 16S rRNA. In the 70S ribosome it contacts the 23S rRNA (bridge B1a) and protein L5 of the 50S subunit (bridge B1b), connecting the 2 subunits; these bridges are implicated in subunit movement. Contacts the tRNAs in the A and P-sites. This is Small ribosomal subunit protein uS13 from Histophilus somni (strain 129Pt) (Haemophilus somnus).